The sequence spans 105 residues: 5-hydroxymethyl-dUMP N-hydrolase (105 aa).

6 residues coordinate 5-hydroxymethyl-dUMP: glycine 6, isoleucine 8, serine 42, glycine 44, glutamate 48, and serine 72.

Belongs to the 2'-deoxynucleoside 5'-phosphate N-hydrolase 1 family. In terms of assembly, monomer and homodimer.

Its subcellular location is the cytoplasm. It is found in the nucleus. The enzyme catalyses 5-hydroxymethyl-dUMP + H2O = 5-hydroxymethyluracil + 2-deoxy-D-ribose 5-phosphate. Part of a nucleotide salvage pathway that eliminates epigenetically modified 5-hydroxymethyl-dCMP (hmdCMP) in a two-step process entailing deamination to cytotoxic 5-hydroxymethyl-dUMP (hmdUMP), followed by its hydrolysis into 5-hydroxymethyluracil (hmU) and 2-deoxy-D-ribose 5-phosphate (deoxyribosephosphate). Catalyzes the second step in that pathway, the hydrolysis of the N-glycosidic bond in hmdUMP, degrading this cytotoxic nucleotide to avoid its genomic integration. This chain is 5-hydroxymethyl-dUMP N-hydrolase, found in Branchiostoma floridae (Florida lancelet).